The following is a 443-amino-acid chain: Serine--tRNA ligase (443 aa).

Thr246–Glu248 is an L-serine binding site. Arg277 to Glu279 provides a ligand contact to ATP. Glu300 is a binding site for L-serine. Glu367–Ser370 is an ATP binding site. Residue Ser402 coordinates L-serine.

The protein belongs to the class-II aminoacyl-tRNA synthetase family. Type-1 seryl-tRNA synthetase subfamily. In terms of assembly, homodimer. The tRNA molecule binds across the dimer.

It localises to the cytoplasm. The enzyme catalyses tRNA(Ser) + L-serine + ATP = L-seryl-tRNA(Ser) + AMP + diphosphate + H(+). The catalysed reaction is tRNA(Sec) + L-serine + ATP = L-seryl-tRNA(Sec) + AMP + diphosphate + H(+). It participates in aminoacyl-tRNA biosynthesis; selenocysteinyl-tRNA(Sec) biosynthesis; L-seryl-tRNA(Sec) from L-serine and tRNA(Sec): step 1/1. Catalyzes the attachment of serine to tRNA(Ser). Is also able to aminoacylate tRNA(Sec) with serine, to form the misacylated tRNA L-seryl-tRNA(Sec), which will be further converted into selenocysteinyl-tRNA(Sec). This is Serine--tRNA ligase from Bradyrhizobium diazoefficiens (strain JCM 10833 / BCRC 13528 / IAM 13628 / NBRC 14792 / USDA 110).